Reading from the N-terminus, the 157-residue chain is uncharacterized protein (157 aa).

One can recognise an N-acetyltransferase domain in the interval 9-154 (LLINYKTLDE…ETNSNAITNE (146 aa)).

This is an uncharacterized protein from Bacillus mycoides (strain KBAB4) (Bacillus weihenstephanensis).